A 209-amino-acid chain; its full sequence is FMN-dependent NADH:quinone oxidoreductase (209 aa).

FMN contacts are provided by residues Ser-10, 16 to 18, and 98 to 101; these read SHS and MWNF.

Belongs to the azoreductase type 1 family. As to quaternary structure, homodimer. FMN serves as cofactor.

It carries out the reaction 2 a quinone + NADH + H(+) = 2 a 1,4-benzosemiquinone + NAD(+). It catalyses the reaction N,N-dimethyl-1,4-phenylenediamine + anthranilate + 2 NAD(+) = 2-(4-dimethylaminophenyl)diazenylbenzoate + 2 NADH + 2 H(+). Quinone reductase that provides resistance to thiol-specific stress caused by electrophilic quinones. In terms of biological role, also exhibits azoreductase activity. Catalyzes the reductive cleavage of the azo bond in aromatic azo compounds to the corresponding amines. In Nitratidesulfovibrio vulgaris (strain ATCC 29579 / DSM 644 / CCUG 34227 / NCIMB 8303 / VKM B-1760 / Hildenborough) (Desulfovibrio vulgaris), this protein is FMN-dependent NADH:quinone oxidoreductase.